The sequence spans 198 residues: Undecaprenyl phosphate transporter A (198 aa).

Transmembrane regions (helical) follow at residues 15-35, 47-67, 107-127, 135-155, and 169-189; these read MGYAGIAIGLMIEIIPSEIVL, IGFIGAIIAGVIGGTIAQIFI, VVFSARFIPVVRHAISIPAGI, FVVLTVLAIIPWSILFVYLGI, and GTYTTPIMILAVVVIALYFVI.

Belongs to the DedA family.

The protein resides in the cell membrane. In terms of biological role, flippase that catalyzes the transport of undecaprenyl phosphate (UndP) across the cytoplasmic membrane, from the external side to the cytoplasmic side. Is involved in UndP recycling during peptidoglycan synthesis. This is Undecaprenyl phosphate transporter A from Bacillus subtilis (strain 168).